Consider the following 953-residue polypeptide: Ribonuclease E (953 aa).

Disordered regions lie at residues methionine 1–leucine 23 and valine 118–proline 314. Residues serine 14 to leucine 23 are compositionally biased toward basic and acidic residues. Over residues leucine 127–glycine 150 the composition is skewed to acidic residues. Over residues asparagine 157–arginine 169 the composition is skewed to basic residues. The segment covering aspartate 183–phenylalanine 193 has biased composition (polar residues). A compositionally biased stretch (acidic residues) spans alanine 199 to glycine 223. Residues arginine 230–serine 240 show a composition bias toward basic residues. Basic and acidic residues-rich tracts occupy residues valine 263–aspartate 272 and threonine 294–arginine 311. The region spanning glycine 376–glutamine 453 is the S1 motif domain. The Mg(2+) site is built by aspartate 647 and aspartate 691. Residues cysteine 749 and cysteine 752 each coordinate Zn(2+). Disordered stretches follow at residues serine 766–glutamate 808 and leucine 822–aspartate 953. Positions aspartate 848–alanine 915 are enriched in acidic residues.

It belongs to the RNase E/G family. Assembles into a homotetramer formed by a dimer of dimers. Interacts with DNA-binding protein HU (hupB). Mg(2+) is required as a cofactor. Zn(2+) serves as cofactor.

The protein resides in the cytoplasm. The enzyme catalyses Endonucleolytic cleavage of single-stranded RNA in A- and U-rich regions.. Functionally, endoribonuclease that plays a central role in RNA processing and decay. Plays a major role in pre-16S rRNA maturation, probably generating the mature 5'-end, and a minor role in pre-5S and pre-23S rRNA maturation. Probably also processes tRNA. RNase E and HupB jointly contribute to cellular adaptation to changing growth conditions and survival during antibiotic treatment and in the host. This is Ribonuclease E from Mycobacterium tuberculosis (strain ATCC 25618 / H37Rv).